The chain runs to 228 residues: Deoxyguanosine kinase (228 aa).

Residue 8–16 (GPIGAGKSS) participates in ATP binding. Residues glutamate 32, tyrosine 44, and glutamine 55 each coordinate substrate. Aspartate 78 (proton acceptor) is an active-site residue. Substrate is bound by residues arginine 79, aspartate 84, and glutamate 149.

This sequence belongs to the DCK/DGK family. As to quaternary structure, heterodimer of a deoxyadenosine (DAK) and a deoxyguanosine kinase (DGK).

The enzyme catalyses 2'-deoxyguanosine + ATP = dGMP + ADP + H(+). Functionally, DGK/DAK plays an essential role in generating the deoxyribonucleotide precursors, dGTP and dATP, for DNA metabolism. The sequence is that of Deoxyguanosine kinase from Lactobacillus acidophilus (strain ATCC 700396 / NCK56 / N2 / NCFM).